Here is a 464-residue protein sequence, read N- to C-terminus: Protein FAM90A3 (464 aa).

3 disordered regions span residues 1–42 (MMAR…DPRL), 70–389 (PATL…HDGA), and 411–437 (APSF…SEAP). Composition is skewed to basic and acidic residues over residues 74-89 (GKKE…KPRV) and 97-114 (NKDK…DPQR). A compositionally biased stretch (low complexity) spans 180-197 (LASLSPLRKASLSSSSSL).

The protein belongs to the FAM90 family.

The sequence is that of Protein FAM90A3 from Homo sapiens (Human).